A 335-amino-acid chain; its full sequence is G-protein coupled receptor 157 (335 aa).

The Extracellular portion of the chain corresponds to 1 to 15 (MQPSPPPTELVPSER). The helical transmembrane segment at 16-36 (AVVLLSCALSALGSGLLVATH) threads the bilayer. Over 37 to 48 (ALWPDLRSRARR) the chain is Cytoplasmic. The chain crosses the membrane as a helical span at residues 49–69 (LLLFLSLADLLSAASYFYGVL). Over 70–87 (QNFAGPSWDCVLQGALST) the chain is Extracellular. A helical membrane pass occupies residues 88–108 (FANTSSFFWTVAIALYLYLSI). Residues 109–119 (VRAARGPRTDR) are Cytoplasmic-facing. The chain crosses the membrane as a helical span at residues 120–140 (LLWAFHVVSWGVPLVITVAAV). Residues 141–166 (ALKKIGYDASDVSVGWCWIDLEAKDH) lie on the Extracellular side of the membrane. Residues 167–187 (VLWMLLTGKLWEMLAYVLLPL) form a helical membrane-spanning segment. Residues 188–226 (LYLLVRKHINRAHTALSEYRPILSQEHRLLRHSSMADKK) lie on the Cytoplasmic side of the membrane. A helical transmembrane segment spans residues 227 to 247 (LVLIPLIFIGLRVWSTVRFVL). Residues 248-258 (TLCGSPAVQTP) lie on the Extracellular side of the membrane. The helical transmembrane segment at 259-279 (VLVVLHGIGNTFQGGANCIMF) threads the bilayer. Topologically, residues 280–335 (VLCTRAVRTRLFSLCCCCCSSQPPTKSPAGTPKAPAPSKPGESQESQGTPGELPST) are cytoplasmic. Residues 300–335 (SQPPTKSPAGTPKAPAPSKPGESQESQGTPGELPST) form a disordered region. Positions 320–335 (GESQESQGTPGELPST) are enriched in polar residues.

This sequence belongs to the G-protein coupled receptor 2 family.

Its subcellular location is the cell projection. The protein localises to the cilium membrane. Its function is as follows. Orphan receptor that promotes neuronal differentiation of radial glial progenitors (RGPs). The activity of this receptor is mediated by a G(q)-protein that activates a phosphatidylinositol-calcium second messenger. The chain is G-protein coupled receptor 157 (GPR157) from Homo sapiens (Human).